A 249-amino-acid chain; its full sequence is MPSAPDAPAAPDAAASVAPNPPAALPVTVRWLGETPYDACFDAMRAFTDARTPDTDDEIWVVEHPPVYTLGQAGNPAHLLVADSGVPLVKVDRGGQITYHGPGQIVAYLLVDLRRRKLMVRTLVTRIEEAVIETLAAYNLASARKAGAPGIYVESGPHRGAKIAALGLKIRNGCSYHGLSVNVKMDLRPFLAINPCGYAGLETIDMASLGATADWHEVAQTLVRRLIAHLDGATAAAALPQQALEQSND.

Residues 53–234 form the BPL/LPL catalytic domain; that stretch reads PDTDDEIWVV…RLIAHLDGAT (182 aa). Substrate is bound by residues 93 to 100, 165 to 167, and 178 to 180; these read RGGQITYH, ALG, and GLS. Catalysis depends on Cys-196, which acts as the Acyl-thioester intermediate.

It belongs to the LipB family.

It is found in the cytoplasm. It carries out the reaction octanoyl-[ACP] + L-lysyl-[protein] = N(6)-octanoyl-L-lysyl-[protein] + holo-[ACP] + H(+). It functions in the pathway protein modification; protein lipoylation via endogenous pathway; protein N(6)-(lipoyl)lysine from octanoyl-[acyl-carrier-protein]: step 1/2. Functionally, catalyzes the transfer of endogenously produced octanoic acid from octanoyl-acyl-carrier-protein onto the lipoyl domains of lipoate-dependent enzymes. Lipoyl-ACP can also act as a substrate although octanoyl-ACP is likely to be the physiological substrate. In Burkholderia mallei (strain NCTC 10247), this protein is Octanoyltransferase.